A 223-amino-acid polypeptide reads, in one-letter code: DNA mismatch repair protein MutH (223 aa).

Belongs to the MutH family.

The protein localises to the cytoplasm. Functionally, sequence-specific endonuclease that cleaves unmethylated GATC sequences. It is involved in DNA mismatch repair. The protein is DNA mismatch repair protein MutH of Shewanella baltica (strain OS223).